Consider the following 472-residue polypeptide: 3-isopropylmalate dehydratase large subunit (472 aa).

3 residues coordinate [4Fe-4S] cluster: C353, C414, and C417.

Belongs to the aconitase/IPM isomerase family. LeuC type 1 subfamily. In terms of assembly, heterodimer of LeuC and LeuD. [4Fe-4S] cluster is required as a cofactor.

It catalyses the reaction (2R,3S)-3-isopropylmalate = (2S)-2-isopropylmalate. Its pathway is amino-acid biosynthesis; L-leucine biosynthesis; L-leucine from 3-methyl-2-oxobutanoate: step 2/4. Its function is as follows. Catalyzes the isomerization between 2-isopropylmalate and 3-isopropylmalate, via the formation of 2-isopropylmaleate. In Acinetobacter baumannii (strain AB307-0294), this protein is 3-isopropylmalate dehydratase large subunit.